We begin with the raw amino-acid sequence, 427 residues long: Serine--tRNA ligase (427 aa).

Thr-235–Glu-237 is a binding site for L-serine. Residues Arg-266–Glu-268 and Val-282 contribute to the ATP site. Glu-289 contributes to the L-serine binding site. Glu-353 to Ser-356 serves as a coordination point for ATP. Ser-389 is a binding site for L-serine.

Belongs to the class-II aminoacyl-tRNA synthetase family. Type-1 seryl-tRNA synthetase subfamily. In terms of assembly, homodimer. The tRNA molecule binds across the dimer.

The protein resides in the cytoplasm. The catalysed reaction is tRNA(Ser) + L-serine + ATP = L-seryl-tRNA(Ser) + AMP + diphosphate + H(+). The enzyme catalyses tRNA(Sec) + L-serine + ATP = L-seryl-tRNA(Sec) + AMP + diphosphate + H(+). It functions in the pathway aminoacyl-tRNA biosynthesis; selenocysteinyl-tRNA(Sec) biosynthesis; L-seryl-tRNA(Sec) from L-serine and tRNA(Sec): step 1/1. In terms of biological role, catalyzes the attachment of serine to tRNA(Ser). Is also able to aminoacylate tRNA(Sec) with serine, to form the misacylated tRNA L-seryl-tRNA(Sec), which will be further converted into selenocysteinyl-tRNA(Sec). In Chloroherpeton thalassium (strain ATCC 35110 / GB-78), this protein is Serine--tRNA ligase.